Reading from the N-terminus, the 510-residue chain is MEEIQRYLQLKRSQQHNFLYPLIFQEYIYAFAHDRSFSRSILSEKTGYEKKSSLLIVKRVITRMYQQNPFIIFLNDSTQNKFLGHNNNFYSQLISEGFAFIVEIPFFLRLISSREGKKKKIVKSQNLRSIHSIFPFLEDSFSHLNFLLDILIPHPVHVEILVQTLRYWVKDASSLHLIRFLLNEYCNSNCVFIPKKASSSFSNSKRNQRLFLFLYNSHVCEYESIFFFLRNQSSRLRSTSSRVLLERIYFYGKIEHLVNVVVKVKDFQANLWLVKEPCMHYVRYQRKAILASKGTSLFMNKWKCFLVTFWQWHFSLWFHPRRIYINQLSKNFLECLGYLSSVQMNPSVVRSQILENSFLINNAIKKFDTLVPIIPLIASLANTKFCNVLGHPISKPVWADLSDSHIIDRFGRICRNLSHYHSGSSKKKSLYRIKYILRLSCARTLARKHKSTVRAFFKRLGSELLEEFLMSEEDVLFLTFPKASSTLRGVSKSRIWYLDILCISDLVNYK.

The protein belongs to the intron maturase 2 family. MatK subfamily.

Its subcellular location is the plastid. The protein localises to the chloroplast. Usually encoded in the trnK tRNA gene intron. Probably assists in splicing its own and other chloroplast group II introns. This chain is Maturase K, found in Penstemon heterophyllus (Foothill penstemon).